Reading from the N-terminus, the 631-residue chain is DNA mismatch repair protein MutL (631 aa).

Belongs to the DNA mismatch repair MutL/HexB family.

In terms of biological role, this protein is involved in the repair of mismatches in DNA. It is required for dam-dependent methyl-directed DNA mismatch repair. May act as a 'molecular matchmaker', a protein that promotes the formation of a stable complex between two or more DNA-binding proteins in an ATP-dependent manner without itself being part of a final effector complex. The sequence is that of DNA mismatch repair protein MutL from Mannheimia succiniciproducens (strain KCTC 0769BP / MBEL55E).